The sequence spans 215 residues: Protein Syd (215 aa).

Belongs to the Syd family.

The protein resides in the cell inner membrane. Its function is as follows. Interacts with the SecY protein in vivo. May bind preferentially to an uncomplexed state of SecY, thus functioning either as a chelating agent for excess SecY in the cell or as a regulatory factor that negatively controls the translocase function. This chain is Protein Syd, found in Shewanella piezotolerans (strain WP3 / JCM 13877).